Consider the following 440-residue polypeptide: Xylose isomerase (440 aa).

Catalysis depends on residues histidine 99 and aspartate 102. Mg(2+)-binding residues include glutamate 230, glutamate 266, histidine 269, aspartate 294, aspartate 305, aspartate 307, and aspartate 337.

The protein belongs to the xylose isomerase family. In terms of assembly, homotetramer. Requires Mg(2+) as cofactor.

It localises to the cytoplasm. The enzyme catalyses alpha-D-xylose = alpha-D-xylulofuranose. The protein is Xylose isomerase of Halalkalibacterium halodurans (strain ATCC BAA-125 / DSM 18197 / FERM 7344 / JCM 9153 / C-125) (Bacillus halodurans).